A 1302-amino-acid polypeptide reads, in one-letter code: DNA-directed RNA polymerase subunit beta (1302 aa).

It belongs to the RNA polymerase beta chain family. The RNAP catalytic core consists of 2 alpha, 1 beta, 1 beta' and 1 omega subunit. When a sigma factor is associated with the core the holoenzyme is formed, which can initiate transcription.

The enzyme catalyses RNA(n) + a ribonucleoside 5'-triphosphate = RNA(n+1) + diphosphate. Functionally, DNA-dependent RNA polymerase catalyzes the transcription of DNA into RNA using the four ribonucleoside triphosphates as substrates. The chain is DNA-directed RNA polymerase subunit beta from Spiroplasma citri.